The sequence spans 215 residues: uncharacterized protein (215 aa).

Catalysis depends on charge relay system residues Ser114, Asp162, and His194.

Belongs to the AB hydrolase superfamily. AB hydrolase 2 family.

This is an uncharacterized protein from Rickettsia typhi (strain ATCC VR-144 / Wilmington).